The primary structure comprises 612 residues: Beta-mannosyltransferase 5 (612 aa).

The Cytoplasmic portion of the chain corresponds to 1–12; it reads MVQKQYRFAPKS. Residues 13-33 form a helical membrane-spanning segment; that stretch reads IFTFVFLCFVAIVVIISTSSL. The Extracellular segment spans residues 34–612; that stretch reads VQVEESLDPI…YRAHLKRWQN (579 aa). 3 N-linked (GlcNAc...) asparagine glycosylation sites follow: Asn-224, Asn-230, and Asn-480.

It belongs to the BMT family.

It localises to the membrane. In terms of biological role, beta-mannosyltransferase involved in cell wall biosynthesis. Required for beta-1,2-mannose transfer on phospholipomannan. This chain is Beta-mannosyltransferase 5 (BMT5), found in Candida albicans (strain SC5314 / ATCC MYA-2876) (Yeast).